Here is a 76-residue protein sequence, read N- to C-terminus: cAMP-dependent protein kinase inhibitor alpha (76 aa).

Residue Thr2 is modified to N-acetylthreonine. Positions 49-76 (KTEGEEDAQRSSTEQSGEAQGEAAKSES) are disordered.

Belongs to the PKI family.

In terms of biological role, extremely potent competitive inhibitor of cAMP-dependent protein kinase activity, this protein interacts with the catalytic subunit of the enzyme after the cAMP-induced dissociation of its regulatory chains. This Homo sapiens (Human) protein is cAMP-dependent protein kinase inhibitor alpha (PKIA).